We begin with the raw amino-acid sequence, 522 residues long: Serine/threonine-protein kinase BSK1-2 (522 aa).

Residues 1–54 are disordered; the sequence is MGCCGSSLRVGSHAPEKPPRRARPPPPPPQPHHPRRPSFTLNAHQAAASSSAAS. Residue G2 is the site of N-myristoyl glycine attachment. A Protein kinase domain is found at 79–338; sequence ANIVSESGEK…KLVSILQPLQ (260 aa). ATP contacts are provided by residues 85–93 and K111; that span reads SGEKAPNLV. D205 (proton acceptor) is an active-site residue.

The protein belongs to the protein kinase superfamily. Ser/Thr protein kinase family.

The protein resides in the cell membrane. The catalysed reaction is L-seryl-[protein] + ATP = O-phospho-L-seryl-[protein] + ADP + H(+). It catalyses the reaction L-threonyl-[protein] + ATP = O-phospho-L-threonyl-[protein] + ADP + H(+). In terms of biological role, probable serine/threonine kinase that functions as a positive regulator of plant immunity. May be involved in the regulation of pattern-triggered immunity (PTI). Does not seem to be involved in responses to brassinosteroid (BR) signaling. The protein is Serine/threonine-protein kinase BSK1-2 of Oryza sativa subsp. japonica (Rice).